The primary structure comprises 242 residues: Placenta-expressed transcript 1 protein (242 aa).

The N-terminal stretch at 1 to 26 (MAILRSLLLPLGLLLCLWLLCSPASC) is a signal peptide. Topologically, residues 27-220 (TNSTTNCKPF…TTHKSSANRA (194 aa)) are extracellular. N-linked (GlcNAc...) asparagine glycosylation is found at Asn-28, Asn-81, and Asn-106. The interval 162–209 (VITTPTHKPTPAPPKPTTNPQKTTTNHSIPTTSLPKPTTSLYTSHPKL) is disordered. Positions 169-178 (KPTPAPPKPT) are enriched in pro residues. Positions 179–205 (TNPQKTTTNHSIPTTSLPKPTTSLYTS) are enriched in low complexity. The chain crosses the membrane as a helical span at residues 221-241 (FLCPVREAIQILFIFLIGTLL). Residue Phe-242 is a topological domain, cytoplasmic.

N-glycosylated.

The protein resides in the membrane. It is found in the apical cell membrane. Modulates leading keratinocyte migration and cellular adhesion to matrix proteins during a wound-healing response and promotes wound repair. May play a role during trichilemmal differentiation of the hair follicle. This chain is Placenta-expressed transcript 1 protein (PLET1), found in Bos taurus (Bovine).